A 342-amino-acid polypeptide reads, in one-letter code: tRNA(Ile)-lysidine synthase (342 aa).

31-36 (SGGQDS) contributes to the ATP binding site.

This sequence belongs to the tRNA(Ile)-lysidine synthase family.

The protein resides in the cytoplasm. The catalysed reaction is cytidine(34) in tRNA(Ile2) + L-lysine + ATP = lysidine(34) in tRNA(Ile2) + AMP + diphosphate + H(+). In terms of biological role, ligates lysine onto the cytidine present at position 34 of the AUA codon-specific tRNA(Ile) that contains the anticodon CAU, in an ATP-dependent manner. Cytidine is converted to lysidine, thus changing the amino acid specificity of the tRNA from methionine to isoleucine. This chain is tRNA(Ile)-lysidine synthase, found in Nostoc sp. (strain PCC 7120 / SAG 25.82 / UTEX 2576).